Consider the following 329-residue polypeptide: DNA-directed RNA polymerase subunit alpha (329 aa).

An alpha N-terminal domain (alpha-NTD) region spans residues 1–234 (MQGSVTEFLK…EQLDAFVELR (234 aa)). The segment at 248–329 (FDPILLRPVD…WPPASLADDL (82 aa)) is alpha C-terminal domain (alpha-CTD).

This sequence belongs to the RNA polymerase alpha chain family. In terms of assembly, homodimer. The RNAP catalytic core consists of 2 alpha, 1 beta, 1 beta' and 1 omega subunit. When a sigma factor is associated with the core the holoenzyme is formed, which can initiate transcription.

It catalyses the reaction RNA(n) + a ribonucleoside 5'-triphosphate = RNA(n+1) + diphosphate. Its function is as follows. DNA-dependent RNA polymerase catalyzes the transcription of DNA into RNA using the four ribonucleoside triphosphates as substrates. The protein is DNA-directed RNA polymerase subunit alpha of Shewanella amazonensis (strain ATCC BAA-1098 / SB2B).